A 338-amino-acid chain; its full sequence is CDP-paratose 2-epimerase (338 aa).

T124 serves as a coordination point for substrate. The Proton acceptor role is filled by Y164.

It belongs to the NAD(P)-dependent epimerase/dehydratase family. As to quaternary structure, homotetramer. NAD(+) serves as cofactor.

The enzyme catalyses CDP-alpha-D-paratose = CDP-3,6-dideoxy-alpha-D-mannose. It participates in nucleotide-sugar biosynthesis; CDP-3,6-dideoxy-D-mannose biosynthesis; CDP-3,6-dideoxy-D-mannose from CTP and alpha-D-glucose 1-phosphate: step 5/5. In terms of biological role, catalyzes the isomeration of CDP-paratose to CDP-tyvelose. The polypeptide is CDP-paratose 2-epimerase (rfbE) (Salmonella typhi).